Consider the following 433-residue polypeptide: D-amino acid dehydrogenase (433 aa).

3 to 17 (VVILGSGVVGVASAW) is a binding site for FAD.

Belongs to the DadA oxidoreductase family. FAD serves as cofactor.

It carries out the reaction a D-alpha-amino acid + A + H2O = a 2-oxocarboxylate + AH2 + NH4(+). The protein operates within amino-acid degradation; D-alanine degradation; NH(3) and pyruvate from D-alanine: step 1/1. Functionally, oxidative deamination of D-amino acids. In Erwinia tasmaniensis (strain DSM 17950 / CFBP 7177 / CIP 109463 / NCPPB 4357 / Et1/99), this protein is D-amino acid dehydrogenase.